Consider the following 707-residue polypeptide: Polyribonucleotide nucleotidyltransferase (707 aa).

Mg(2+)-binding residues include Asp487 and Asp493. The region spanning 554–613 (PSMATIKIDPDKIRDVIGKGGATIRKICDDTGASIDLDDDGTVRIYAEDKTAAKAAIDTV) is the KH domain. The 69-residue stretch at 623 to 691 (GKLYRGTVAR…NRNRVKLSIK (69 aa)) folds into the S1 motif domain.

It belongs to the polyribonucleotide nucleotidyltransferase family. Component of the RNA degradosome, which is a multiprotein complex involved in RNA processing and mRNA degradation. The cofactor is Mg(2+).

It is found in the cytoplasm. It catalyses the reaction RNA(n+1) + phosphate = RNA(n) + a ribonucleoside 5'-diphosphate. Functionally, involved in mRNA degradation. Catalyzes the phosphorolysis of single-stranded polyribonucleotides processively in the 3'- to 5'-direction. This chain is Polyribonucleotide nucleotidyltransferase, found in Chromohalobacter salexigens (strain ATCC BAA-138 / DSM 3043 / CIP 106854 / NCIMB 13768 / 1H11).